The sequence spans 413 residues: 3-isopropylmalate dehydratase large subunit (413 aa).

Residues Cys295, Cys353, and Cys356 each contribute to the [4Fe-4S] cluster site.

It belongs to the aconitase/IPM isomerase family. LeuC type 2 subfamily. In terms of assembly, heterodimer of LeuC and LeuD. Requires [4Fe-4S] cluster as cofactor.

The catalysed reaction is (2R,3S)-3-isopropylmalate = (2S)-2-isopropylmalate. It functions in the pathway amino-acid biosynthesis; L-leucine biosynthesis; L-leucine from 3-methyl-2-oxobutanoate: step 2/4. Catalyzes the isomerization between 2-isopropylmalate and 3-isopropylmalate, via the formation of 2-isopropylmaleate. This Pyrobaculum calidifontis (strain DSM 21063 / JCM 11548 / VA1) protein is 3-isopropylmalate dehydratase large subunit.